A 705-amino-acid chain; its full sequence is Ion-translocating oxidoreductase complex subunit C (705 aa).

4Fe-4S ferredoxin-type domains are found at residues 368-397 (MGETPEEQGCIRCSACADACPADLLPQQLY) and 407-435 (KATAHNIADCIECGACAWVCPSSIPLVQY). [4Fe-4S] cluster is bound by residues Cys-377, Cys-380, Cys-383, Cys-387, Cys-416, Cys-419, Cys-422, and Cys-426. Positions 536-684 (RARQAENIPA…EPVDPRKAAV (149 aa)) are disordered.

Belongs to the 4Fe4S bacterial-type ferredoxin family. RnfC subfamily. In terms of assembly, the complex is composed of six subunits: RnfA, RnfB, RnfC, RnfD, RnfE and RnfG. The cofactor is [4Fe-4S] cluster.

Its subcellular location is the cell inner membrane. In terms of biological role, part of a membrane-bound complex that couples electron transfer with translocation of ions across the membrane. In Citrobacter koseri (strain ATCC BAA-895 / CDC 4225-83 / SGSC4696), this protein is Ion-translocating oxidoreductase complex subunit C.